The primary structure comprises 156 residues: Small ribosomal subunit protein uS7 (156 aa).

It belongs to the universal ribosomal protein uS7 family. Part of the 30S ribosomal subunit. Contacts proteins S9 and S11.

One of the primary rRNA binding proteins, it binds directly to 16S rRNA where it nucleates assembly of the head domain of the 30S subunit. Is located at the subunit interface close to the decoding center, probably blocks exit of the E-site tRNA. This Solidesulfovibrio magneticus (strain ATCC 700980 / DSM 13731 / RS-1) (Desulfovibrio magneticus) protein is Small ribosomal subunit protein uS7.